Consider the following 540-residue polypeptide: Probable tubulin polyglutamylase TTLL2 (540 aa).

A TTL domain is found at Leu-41–Cys-384. ATP is bound by residues Lys-169, Arg-175–Gly-176, Gln-197–Ile-200, and Lys-210–Asp-212. Residue Arg-175 participates in a protein binding. Arg-236 contacts L-glutamate. Thr-255–Asn-256 contacts ATP. Ser-258 and Lys-278 together coordinate L-glutamate. 3 residues coordinate Mg(2+): Asp-330, Glu-343, and Asn-345. Lys-361 is an L-glutamate binding site. The segment at Ser-479–Thr-499 is disordered.

The protein belongs to the tubulin--tyrosine ligase family. Mg(2+) is required as a cofactor. Highly expressed in brain, kidney, liver and testis. Expressed in heart, lung, muscle and spleen.

Its function is as follows. Probable tubulin polyglutamylase that generates side chains of glutamate on the gamma-carboxyl group of specific glutamate residues within the C-terminal tail of target proteins. Similar to TTLL1, may acquire enzymatic activity only in complex with other proteins as it is most likely lacking domains important for autonomous activity. Probably involved in the side-chain initiation step of the polyglutamylation reaction rather than the elongation step. This is Probable tubulin polyglutamylase TTLL2 from Mus musculus (Mouse).